The following is an 845-amino-acid chain: Protein translocase subunit SecA (845 aa).

ATP-binding positions include Q85, G103–T107, and D492. A disordered region spans residues R787–A845. Zn(2+) contacts are provided by C829, C831, C840, and H841. Positions K835–A845 are enriched in basic residues.

The protein belongs to the SecA family. In terms of assembly, monomer and homodimer. Part of the essential Sec protein translocation apparatus which comprises SecA, SecYEG and auxiliary proteins SecDF. Other proteins may also be involved. Requires Zn(2+) as cofactor.

It is found in the cell membrane. It localises to the cytoplasm. It catalyses the reaction ATP + H2O + cellular proteinSide 1 = ADP + phosphate + cellular proteinSide 2.. Part of the Sec protein translocase complex. Interacts with the SecYEG preprotein conducting channel. Has a central role in coupling the hydrolysis of ATP to the transfer of proteins into and across the cell membrane, serving as an ATP-driven molecular motor driving the stepwise translocation of polypeptide chains across the membrane. In Enterococcus faecalis (strain ATCC 700802 / V583), this protein is Protein translocase subunit SecA.